The following is a 336-amino-acid chain: Succinylglutamate desuccinylase (336 aa).

Zn(2+) is bound by residues H59, E62, and H151. E215 is an active-site residue.

It belongs to the AspA/AstE family. Succinylglutamate desuccinylase subfamily. Requires Zn(2+) as cofactor.

The catalysed reaction is N-succinyl-L-glutamate + H2O = L-glutamate + succinate. It participates in amino-acid degradation; L-arginine degradation via AST pathway; L-glutamate and succinate from L-arginine: step 5/5. Its function is as follows. Transforms N(2)-succinylglutamate into succinate and glutamate. This chain is Succinylglutamate desuccinylase, found in Pseudomonas fluorescens (strain Pf0-1).